The sequence spans 590 residues: Aspartate--tRNA ligase (590 aa).

Glutamate 172 is a binding site for L-aspartate. Residues glutamine 196–lysine 199 form an aspartate region. L-aspartate is bound at residue arginine 218. ATP contacts are provided by residues arginine 218 to glutamate 220 and glutamine 227. An L-aspartate-binding site is contributed by histidine 449. An ATP-binding site is contributed by glutamate 483. Arginine 490 lines the L-aspartate pocket. An ATP-binding site is contributed by glycine 535 to arginine 538.

The protein belongs to the class-II aminoacyl-tRNA synthetase family. Type 1 subfamily. As to quaternary structure, homodimer.

The protein resides in the cytoplasm. The catalysed reaction is tRNA(Asp) + L-aspartate + ATP = L-aspartyl-tRNA(Asp) + AMP + diphosphate. Functionally, catalyzes the attachment of L-aspartate to tRNA(Asp) in a two-step reaction: L-aspartate is first activated by ATP to form Asp-AMP and then transferred to the acceptor end of tRNA(Asp). This Mannheimia succiniciproducens (strain KCTC 0769BP / MBEL55E) protein is Aspartate--tRNA ligase.